A 142-amino-acid polypeptide reads, in one-letter code: uncharacterized protein (142 aa).

In terms of assembly, homodimer.

This is an uncharacterized protein from Bacillus subtilis (strain 168).